Reading from the N-terminus, the 365-residue chain is Aminomethyltransferase (365 aa).

Belongs to the GcvT family. The glycine cleavage system is composed of four proteins: P, T, L and H.

It catalyses the reaction N(6)-[(R)-S(8)-aminomethyldihydrolipoyl]-L-lysyl-[protein] + (6S)-5,6,7,8-tetrahydrofolate = N(6)-[(R)-dihydrolipoyl]-L-lysyl-[protein] + (6R)-5,10-methylene-5,6,7,8-tetrahydrofolate + NH4(+). In terms of biological role, the glycine cleavage system catalyzes the degradation of glycine. This chain is Aminomethyltransferase, found in Chlorobium phaeobacteroides (strain DSM 266 / SMG 266 / 2430).